A 313-amino-acid chain; its full sequence is uncharacterized protein (313 aa).

9 helical membrane passes run 31–53, 62–84, 104–126, 147–161, 166–185, 198–220, 225–244, 264–282, and 286–308; these read AWGIGVIFPLYSLHALVLGGWLF, LFLFGCVFGMYEAYITKVLWNPY, VFFWHPIFAFILPLLIAEYIYTS, FALLLAALAGLNQSV, SMFWVALLSFFTILTPSFLL, RVLKLLTFALIILYLFWTFALRF, SFSGQLVVWLFYLLLFYLII, FFAACFLVYLTAFLITSSF, and PAAMLFLLAGTAYGTIVFASILI.

It is found in the cell membrane. This is an uncharacterized protein from Archaeoglobus fulgidus (strain ATCC 49558 / DSM 4304 / JCM 9628 / NBRC 100126 / VC-16).